A 144-amino-acid polypeptide reads, in one-letter code: Large ribosomal subunit protein uL15 (144 aa).

The tract at residues 1–52 is disordered; that stretch reads MRLNSLSPAEGAKHSAKRLGRGIGSGLGKTGGRGHKGQKSRTGGGVRRGFEG. Residues 21–31 show a composition bias toward gly residues; the sequence is RGIGSGLGKTG.

It belongs to the universal ribosomal protein uL15 family. Part of the 50S ribosomal subunit.

Its function is as follows. Binds to the 23S rRNA. The sequence is that of Large ribosomal subunit protein uL15 from Actinobacillus pleuropneumoniae serotype 5b (strain L20).